The following is a 264-amino-acid chain: Dehydrodolichyl diphosphate synthase complex subunit SPAC4D7.04c (264 aa).

This sequence belongs to the UPP synthase family. In terms of assembly, forms an active dehydrodolichyl diphosphate synthase complex with nus1. Mg(2+) serves as cofactor.

The protein resides in the endoplasmic reticulum membrane. The enzyme catalyses n isopentenyl diphosphate + (2E,6E)-farnesyl diphosphate = a di-trans,poly-cis-polyprenyl diphosphate + n diphosphate. The protein operates within protein modification; protein glycosylation. In terms of biological role, with nus1, forms the dehydrodolichyl diphosphate synthase (DDS) complex, an essential component of the dolichol monophosphate (Dol-P) biosynthetic machinery. Adds multiple copies of isopentenyl pyrophosphate (IPP) to farnesyl pyrophosphate (FPP) to produce dehydrodolichyl diphosphate (Dedol-PP), a precursor of dolichol which is utilized as a sugar carrier in protein glycosylation in the endoplasmic reticulum (ER). This Schizosaccharomyces pombe (strain 972 / ATCC 24843) (Fission yeast) protein is Dehydrodolichyl diphosphate synthase complex subunit SPAC4D7.04c.